Here is a 266-residue protein sequence, read N- to C-terminus: Energy-coupling factor transporter ATP-binding protein EcfA1 (266 aa).

Residues 2–237 (IKLNNVTFRY…EKIIEIAKIA (236 aa)) enclose the ABC transporter domain. 37-44 (GHNGSGKS) lines the ATP pocket.

This sequence belongs to the ABC transporter superfamily. Energy-coupling factor EcfA family. Forms a stable energy-coupling factor (ECF) transporter complex composed of 2 membrane-embedded substrate-binding proteins (S component), 2 ATP-binding proteins (A component) and 2 transmembrane proteins (T component).

The protein resides in the cell membrane. ATP-binding (A) component of a common energy-coupling factor (ECF) ABC-transporter complex. Unlike classic ABC transporters this ECF transporter provides the energy necessary to transport a number of different substrates. The chain is Energy-coupling factor transporter ATP-binding protein EcfA1 from Mycoplasmopsis synoviae (strain 53) (Mycoplasma synoviae).